The chain runs to 68 residues: Ferredoxin Fdx (68 aa).

5 residues coordinate [3Fe-4S] cluster: cysteine 12, glutamine 13, alanine 16, cysteine 18, and cysteine 56.

[3Fe-4S] cluster is required as a cofactor.

Its function is as follows. Ferredoxin that is the redox partner of cytochrome CYP51, a sterol 14alpha-demethylase encoded by an adjacent gene. This Mycobacterium tuberculosis (strain ATCC 25618 / H37Rv) protein is Ferredoxin Fdx.